Consider the following 308-residue polypeptide: Probable acetylxylan esterase A (308 aa).

An N-terminal signal peptide occupies residues 1 to 19 (MAPFSFLLTLLLYTLSAGA). An N-linked (GlcNAc...) asparagine glycan is attached at N141. The Charge relay system role is filled by S151. An N-linked (GlcNAc...) asparagine glycan is attached at N193.

It belongs to the carbohydrate esterase 1 (CE1) family. AxeA subfamily. As to quaternary structure, monomer.

It is found in the secreted. The catalysed reaction is Deacetylation of xylans and xylo-oligosaccharides.. The protein operates within glycan degradation; xylan degradation. In terms of biological role, acetylxylan esterase involved in the hydrolysis of xylan, a major structural heterogeneous polysaccharide found in plant biomass representing the second most abundant polysaccharide in the biosphere, after cellulose. Degrades acetylated xylans by cleaving acetyl side groups from the hetero-xylan backbone. The polypeptide is Probable acetylxylan esterase A (axeA) (Aspergillus clavatus (strain ATCC 1007 / CBS 513.65 / DSM 816 / NCTC 3887 / NRRL 1 / QM 1276 / 107)).